The primary structure comprises 565 residues: NAD-dependent malic enzyme (565 aa).

Tyr-104 functions as the Proton donor in the catalytic mechanism. Arg-157 contributes to the NAD(+) binding site. The active-site Proton acceptor is Lys-175. 3 residues coordinate a divalent metal cation: Glu-246, Asp-247, and Asp-270. 2 residues coordinate NAD(+): Asp-270 and Asn-418.

The protein belongs to the malic enzymes family. In terms of assembly, homotetramer. It depends on Mg(2+) as a cofactor. Mn(2+) serves as cofactor.

The enzyme catalyses (S)-malate + NAD(+) = pyruvate + CO2 + NADH. The catalysed reaction is oxaloacetate + H(+) = pyruvate + CO2. This chain is NAD-dependent malic enzyme, found in Yersinia pseudotuberculosis serotype O:1b (strain IP 31758).